We begin with the raw amino-acid sequence, 290 residues long: Bifunctional protein FolD (290 aa).

NADP(+)-binding positions include 169 to 171, Ile-194, and Ile-235; that span reads GAS.

It belongs to the tetrahydrofolate dehydrogenase/cyclohydrolase family. Homodimer.

The catalysed reaction is (6R)-5,10-methylene-5,6,7,8-tetrahydrofolate + NADP(+) = (6R)-5,10-methenyltetrahydrofolate + NADPH. The enzyme catalyses (6R)-5,10-methenyltetrahydrofolate + H2O = (6R)-10-formyltetrahydrofolate + H(+). It functions in the pathway one-carbon metabolism; tetrahydrofolate interconversion. Catalyzes the oxidation of 5,10-methylenetetrahydrofolate to 5,10-methenyltetrahydrofolate and then the hydrolysis of 5,10-methenyltetrahydrofolate to 10-formyltetrahydrofolate. This chain is Bifunctional protein FolD, found in Helicobacter pylori (strain J99 / ATCC 700824) (Campylobacter pylori J99).